A 949-amino-acid chain; its full sequence is Bifunctional uridylyltransferase/uridylyl-removing enzyme (949 aa).

The tract at residues Met-1–Ala-377 is uridylyltransferase. The tract at residues Gly-378–Thr-733 is uridylyl-removing. Residues Val-494–Leu-610 form the HD domain. ACT domains follow at residues Glu-734–Ser-816 and Val-845–Pro-926. Positions Pro-926–Thr-949 are disordered.

The protein belongs to the GlnD family. Mg(2+) is required as a cofactor.

The enzyme catalyses [protein-PII]-L-tyrosine + UTP = [protein-PII]-uridylyl-L-tyrosine + diphosphate. It carries out the reaction [protein-PII]-uridylyl-L-tyrosine + H2O = [protein-PII]-L-tyrosine + UMP + H(+). Its activity is regulated as follows. Uridylyltransferase (UTase) activity is inhibited by glutamine, while glutamine activates uridylyl-removing (UR) activity. In terms of biological role, modifies, by uridylylation and deuridylylation, the PII regulatory proteins (GlnB and homologs), in response to the nitrogen status of the cell that GlnD senses through the glutamine level. Under low glutamine levels, catalyzes the conversion of the PII proteins and UTP to PII-UMP and PPi, while under higher glutamine levels, GlnD hydrolyzes PII-UMP to PII and UMP (deuridylylation). Thus, controls uridylylation state and activity of the PII proteins, and plays an important role in the regulation of nitrogen fixation and metabolism. The polypeptide is Bifunctional uridylyltransferase/uridylyl-removing enzyme (Rhizobium meliloti (strain 1021) (Ensifer meliloti)).